A 392-amino-acid chain; its full sequence is uncharacterized protein (392 aa).

Residues 1 to 34 constitute a mitochondrion transit peptide; the sequence is MCISSSSLLCGINSLKYASNRVGILIPPFQTASS. The next 8 membrane-spanning stretches (helical) occupy residues 115 to 135, 150 to 172, 185 to 205, 208 to 225, 277 to 297, 299 to 319, 321 to 341, and 350 to 370; these read VAIM…WHWD, FRFM…WWTL, LLVN…KFGV, ALSV…VALQ, ATFV…AVYA, AAIF…VYPV, AGIF…LNYE, and AHVS…PAMW. Residue S292 is the Nucleophile of the active site. The active site involves H351.

Belongs to the peptidase S54 family.

It is found in the mitochondrion inner membrane. This is an uncharacterized protein from Schizosaccharomyces pombe (strain 972 / ATCC 24843) (Fission yeast).